Reading from the N-terminus, the 103-residue chain is Conantokin R1-A (103 aa).

An N-terminal signal peptide occupies residues 1-21 (MQLYTYLYLLVPLVTFHLILG). Residues 22 to 79 (TGTLDHGGALTERRSTDATALKPEPVLQKSAARSTDDNGKDRLTQMKRILKKRGNNPR) constitute a propeptide that is removed on maturation. The interval 34–83 (RRSTDATALKPEPVLQKSAARSTDDNGKDRLTQMKRILKKRGNNPRADEE) is disordered. Basic and acidic residues predominate over residues 55–65 (STDDNGKDRLT). 3 positions are modified to 4-carboxyglutamate: E82, E83, and E89.

The protein belongs to the conotoxin B superfamily. The cofactor is Ca(2+). Requires Mg(2+) as cofactor. In terms of tissue distribution, expressed by the venom duct.

The protein resides in the secreted. Conantokins inhibit N-methyl-D-aspartate (NMDA) receptors. This toxin has the highest potency for the NR2B/GRIN2B subunit (IC(50)=0.11 uM), followed by NR2D/GRIN2D (IC(50)=0.48 uM), NR2A/GRIN2A (IC(50)=2.1 uM), and NR2C/GRIN2C (IC(50)=6.1 uM) subunits when tested on rat receptors. This Conus rolani (Cone snail) protein is Conantokin R1-A.